The chain runs to 923 residues: Isoleucine--tRNA ligase (923 aa).

The 'HIGH' region motif lies at 57–67 (PYANGDIHIGT). Residue Glu-561 participates in L-isoleucyl-5'-AMP binding. A 'KMSKS' region motif is present at residues 602-606 (AMHKS). Lys-605 contributes to the ATP binding site. Zn(2+) is bound by residues Cys-895, Cys-898, Cys-915, and Cys-918.

The protein belongs to the class-I aminoacyl-tRNA synthetase family. IleS type 1 subfamily. In terms of assembly, monomer. Zn(2+) serves as cofactor.

The protein resides in the cytoplasm. The enzyme catalyses tRNA(Ile) + L-isoleucine + ATP = L-isoleucyl-tRNA(Ile) + AMP + diphosphate. Its function is as follows. Catalyzes the attachment of isoleucine to tRNA(Ile). As IleRS can inadvertently accommodate and process structurally similar amino acids such as valine, to avoid such errors it has two additional distinct tRNA(Ile)-dependent editing activities. One activity is designated as 'pretransfer' editing and involves the hydrolysis of activated Val-AMP. The other activity is designated 'posttransfer' editing and involves deacylation of mischarged Val-tRNA(Ile). This is Isoleucine--tRNA ligase from Brachyspira hyodysenteriae (strain ATCC 49526 / WA1).